We begin with the raw amino-acid sequence, 180 residues long: MSSKRLVRSTTVLCVRRDGKVVMAADGQVTLGEGVIKHNARKLRRLYQDKIIAGFAGSTADAFSLFGRFESKLEQYHGNLSRAAVELGKDWRTDKMLRQLEALLLVADKDQTFLISGQGDVIEPDTGIAAIGSGGSYATAAATALLEHSTLDARQIAEEAMKIAGKICIYTNDRVTIEEL.

Thr10 is a catalytic residue. Na(+) contacts are provided by Gly165, Cys168, and Thr171.

It belongs to the peptidase T1B family. HslV subfamily. In terms of assembly, a double ring-shaped homohexamer of HslV is capped on each side by a ring-shaped HslU homohexamer. The assembly of the HslU/HslV complex is dependent on binding of ATP.

The protein resides in the cytoplasm. The enzyme catalyses ATP-dependent cleavage of peptide bonds with broad specificity.. Allosterically activated by HslU binding. In terms of biological role, protease subunit of a proteasome-like degradation complex believed to be a general protein degrading machinery. This Koribacter versatilis (strain Ellin345) protein is ATP-dependent protease subunit HslV.